Consider the following 484-residue polypeptide: Nuclear rim protein 1 (484 aa).

Ser-3 is modified (phosphoserine). The next 2 membrane-spanning stretches (helical) occupy residues 145–165 and 237–257; these read FTIF…MFGY and IPTN…IVFL. The segment at 416–457 is disordered; that stretch reads SSNENLEKGGAFLPNQDQNRPSKSLSPLRKTPLSARQKRFEG. Residue Ser-417 is modified to Phosphoserine. Polar residues predominate over residues 430–440; it reads NQDQNRPSKSL. Ser-474 carries the post-translational modification Phosphoserine.

This sequence belongs to the NUR1 family. In terms of assembly, interacts with CSM1.

It localises to the nucleus membrane. Functionally, member of a perinuclear network that controls recombination at multiple loci to maintain genome stability. Required for rDNA repeat stability. The chain is Nuclear rim protein 1 (NUR1) from Saccharomyces cerevisiae (strain JAY291) (Baker's yeast).